Here is a 102-residue protein sequence, read N- to C-terminus: MSETTISKEEVAHVAKLAKLSFDDSELTQFTTQLGDILNIFNTLGEVDTAAVEPTYSVTENVNHLRDDVAHNWHQKQGLLENAPLASAGLIKVPAILEDEGE.

Belongs to the GatC family. In terms of assembly, heterotrimer of A, B and C subunits.

The catalysed reaction is L-glutamyl-tRNA(Gln) + L-glutamine + ATP + H2O = L-glutaminyl-tRNA(Gln) + L-glutamate + ADP + phosphate + H(+). The enzyme catalyses L-aspartyl-tRNA(Asn) + L-glutamine + ATP + H2O = L-asparaginyl-tRNA(Asn) + L-glutamate + ADP + phosphate + 2 H(+). Functionally, allows the formation of correctly charged Asn-tRNA(Asn) or Gln-tRNA(Gln) through the transamidation of misacylated Asp-tRNA(Asn) or Glu-tRNA(Gln) in organisms which lack either or both of asparaginyl-tRNA or glutaminyl-tRNA synthetases. The reaction takes place in the presence of glutamine and ATP through an activated phospho-Asp-tRNA(Asn) or phospho-Glu-tRNA(Gln). This is Aspartyl/glutamyl-tRNA(Asn/Gln) amidotransferase subunit C from Leuconostoc citreum (strain KM20).